We begin with the raw amino-acid sequence, 242 residues long: Type III pantothenate kinase (242 aa).

Position 7 to 14 (7 to 14 (DLGNSRFK)) interacts with ATP. Substrate contacts are provided by residues tyrosine 91 and 98–101 (GVDR). Aspartate 100 (proton acceptor) is an active-site residue. Threonine 121 lines the ATP pocket. Threonine 171 lines the substrate pocket.

Belongs to the type III pantothenate kinase family. Homodimer. It depends on NH4(+) as a cofactor. Requires K(+) as cofactor.

It localises to the cytoplasm. The enzyme catalyses (R)-pantothenate + ATP = (R)-4'-phosphopantothenate + ADP + H(+). It participates in cofactor biosynthesis; coenzyme A biosynthesis; CoA from (R)-pantothenate: step 1/5. In terms of biological role, catalyzes the phosphorylation of pantothenate (Pan), the first step in CoA biosynthesis. The polypeptide is Type III pantothenate kinase (Xanthomonas axonopodis pv. citri (strain 306)).